A 309-amino-acid polypeptide reads, in one-letter code: Taste receptor type 2 member 20 (309 aa).

Over 1–6 (MMSFLH) the chain is Extracellular. Residues 7-27 (IVFSILVVVAFILGNFANGFI) form a helical membrane-spanning segment. Over 28-46 (ALINFIAWVKRQKISSADQ) the chain is Cytoplasmic. The helical transmembrane segment at 47–67 (IIAALAVSRVGLLWVILLHWY) threads the bilayer. Over 68 to 79 (STVLNPTSSNLK) the chain is Extracellular. A helical membrane pass occupies residues 80-100 (VIIFISNAWAVTNHFSIWLAT). Residues 101–125 (SLSIFYLLKIVNFSRLIFHHLKRKA) are Cytoplasmic-facing. Residues 126 to 146 (KSVVLVIVLGSLFFLVCXLVM) traverse the membrane as a helical segment. Topologically, residues 147 to 178 (KNTYINVWTEECEGNVTWKIKLRNAMHLSNLT) are extracellular. The chain crosses the membrane as a helical span at residues 179-199 (VAMLANLIPFTLTLISFLLLI). The Cytoplasmic segment spans residues 200 to 229 (YSLCKHLKKMQLHGKGSQDPSTKIHIKALQ). Residues 230-250 (TVTSFLILLAIYFLCLITSFW) form a helical membrane-spanning segment. Over 251–259 (NSKMRPKEI) the chain is Extracellular. The chain crosses the membrane as a helical span at residues 260 to 280 (VLMLCQAFGIIYPSFHSFILI). Residues 281–309 (WGNKTLKQTFLSVLWQVTCWAKGQNQSTP) are Cytoplasmic-facing.

The protein belongs to the G-protein coupled receptor T2R family.

It is found in the membrane. In terms of biological role, receptor that may play a role in the perception of bitterness and is gustducin-linked. May play a role in sensing the chemical composition of the gastrointestinal content. The activity of this receptor may stimulate alpha gustducin, mediate PLC-beta-2 activation and lead to the gating of TRPM5. The sequence is that of Taste receptor type 2 member 20 (TAS2R20) from Pan troglodytes (Chimpanzee).